Reading from the N-terminus, the 533-residue chain is Histone-arginine methyltransferase CARMER (533 aa).

Residues 143 to 452 form the SAM-dependent MTase PRMT-type domain; that stretch reads ASQYFQFYGY…QSYDVTIDLH (310 aa). S-adenosyl-L-methionine is bound by residues Gln-156, Arg-165, Gly-189, Glu-211, Glu-240, and Thr-268. Arg-503 is modified (asymmetric dimethylarginine; by autocatalysis).

This sequence belongs to the class I-like SAM-binding methyltransferase superfamily. Protein arginine N-methyltransferase family. Homodimer. In terms of processing, the dimethylated protein is the major form.

The protein resides in the cytoplasm. It localises to the nucleus. It carries out the reaction L-arginyl-[protein] + 2 S-adenosyl-L-methionine = N(omega),N(omega)-dimethyl-L-arginyl-[protein] + 2 S-adenosyl-L-homocysteine + 2 H(+). Its function is as follows. Methylates (mono- and asymmetric dimethylation) the guanidino nitrogens of arginyl residues in proteins. May methylate histone H3 at 'Arg-17' and activate transcription via chromatin remodeling. In Drosophila willistoni (Fruit fly), this protein is Histone-arginine methyltransferase CARMER (Art4).